The sequence spans 114 residues: Cell cycle protein GpsB (114 aa).

Positions 42-77 (YQKMADMNNEVVKLSEENHKLKKELEELRLRVATSR) form a coiled coil. Residues 74–99 (ATSRPQDNKSFSSNNTTTNTSSNNVD) form a disordered region. Residues 85 to 97 (SSNNTTTNTSSNN) show a composition bias toward low complexity.

Belongs to the GpsB family. In terms of assembly, forms polymers through the coiled coil domains. Interacts with PBP1, MreC and EzrA.

It is found in the cytoplasm. In terms of biological role, divisome component that associates with the complex late in its assembly, after the Z-ring is formed, and is dependent on DivIC and PBP2B for its recruitment to the divisome. Together with EzrA, is a key component of the system that regulates PBP1 localization during cell cycle progression. Its main role could be the removal of PBP1 from the cell pole after pole maturation is completed. Also contributes to the recruitment of PBP1 to the division complex. Not essential for septum formation. This chain is Cell cycle protein GpsB, found in Staphylococcus aureus (strain Mu3 / ATCC 700698).